The chain runs to 333 residues: METLSRLLVFMSLFSGLVSGFALQNLPITSFEESYTQLFGDKNLFVHQDGKSVRLTLDERTGSGFVSNDYYLHGFFSASIKLPSDYTAGVVVAFYMSNGDMYEKNHDEIDFEFLGNIREKEWRVQTNIYGNGSTHSGREERYNLWFDPTEDFHQYSILWSDSHIIFFVDNVPIREVKRTAEMGGHFPSKPMSLYTTIWDGSKWATNGGKYGVNYKYAPYIARFSDLVLHGCPVDPIEQFPRCDEGAAEDMRAAQEITPSQRSKMDVFRRRLMTYSYCYDRARYNVALSECVVNPAEAQRLRVYDPVRFGGIPRRHRNGKHRSKRSRVDGTESI.

Positions 1-20 are cleaved as a signal peptide; sequence METLSRLLVFMSLFSGLVSG. The GH16 domain maps to 21–223; sequence FALQNLPITS…YKYAPYIARF (203 aa). The active-site Nucleophile is the glutamate 108. Glutamate 112 acts as the Proton donor in catalysis. Residues glutamate 112 and 125–127 contribute to the xyloglucan site; that span reads QTN. A glycan (N-linked (GlcNAc...) asparagine) is linked at asparagine 131. Xyloglucan contacts are provided by residues 135 to 139, 202 to 203, glycine 207, and arginine 282; these read HSGRE and KW. A disulfide bridge links cysteine 277 with cysteine 290. Residues 311-333 form a disordered region; the sequence is IPRRHRNGKHRSKRSRVDGTESI. Residues 312 to 324 are compositionally biased toward basic residues; sequence PRRHRNGKHRSKR.

The protein belongs to the glycosyl hydrolase 16 family. XTH group 3 subfamily. Contains at least one intrachain disulfide bond essential for its enzymatic activity. As to expression, expressed in 7 day old seedlings, roots, hypocotyls, rosette leaves, internodes between nodes bearing axillary shoots, nodes bearing flowers, flower buds, anthers and siliques.

Its subcellular location is the secreted. The protein resides in the cell wall. It is found in the extracellular space. It localises to the apoplast. It carries out the reaction breaks a beta-(1-&gt;4) bond in the backbone of a xyloglucan and transfers the xyloglucanyl segment on to O-4 of the non-reducing terminal glucose residue of an acceptor, which can be a xyloglucan or an oligosaccharide of xyloglucan.. In terms of biological role, catalyzes xyloglucan endohydrolysis (XEH) and/or endotransglycosylation (XET). Cleaves and religates xyloglucan polymers, an essential constituent of the primary cell wall, and thereby participates in cell wall construction of growing tissues. Required for cell wall modification during the development of tracheary elements. This Arabidopsis thaliana (Mouse-ear cress) protein is Probable xyloglucan endotransglucosylase/hydrolase protein 27 (XTH27).